Reading from the N-terminus, the 398-residue chain is NADH dehydrogenase [ubiquinone] iron-sulfur protein 2 (398 aa).

3 residues coordinate [4Fe-4S] cluster: Cys-261, Cys-267, and Cys-282.

It belongs to the complex I 49 kDa subunit family. In terms of assembly, complex I is composed of about 45 different subunits. This is a component of the iron-sulfur (IP) fragment of the enzyme. It depends on [4Fe-4S] cluster as a cofactor.

The protein resides in the mitochondrion. The catalysed reaction is a ubiquinone + NADH + 5 H(+)(in) = a ubiquinol + NAD(+) + 4 H(+)(out). Core subunit of the mitochondrial membrane respiratory chain NADH dehydrogenase (Complex I) that is believed to belong to the minimal assembly required for catalysis. Complex I functions in the transfer of electrons from NADH to the respiratory chain. The immediate electron acceptor for the enzyme is believed to be ubiquinone. Component of the iron-sulfur (IP) fragment of the enzyme. The protein is NADH dehydrogenase [ubiquinone] iron-sulfur protein 2 (NAD7) of Nephroselmis olivacea (Green alga).